The sequence spans 272 residues: Energy-coupling factor transporter ATP-binding protein EcfA1 (272 aa).

The ABC transporter domain maps to 5-239 (IKIDNLKYSY…RKALHENGLE (235 aa)). Residue 37 to 44 (GHNGSGKS) coordinates ATP. The Proton acceptor role is filled by E163.

Belongs to the ABC transporter superfamily. Energy-coupling factor EcfA family. In terms of assembly, forms a stable energy-coupling factor (ECF) transporter complex probably composed of 2 membrane-embedded substrate-binding proteins (S component), 2 ATP-binding proteins (A component) and 2 transmembrane proteins (T component). This complex interacts with a number of substrate-specific components, including FolT, PanT and RibU for 5-formyltetrahydrofolate, pantothenate and riboflavin respectively.

The protein localises to the cell membrane. Its function is as follows. ATP-binding (A) component of a common energy-coupling factor (ECF) ABC-transporter complex. Unlike classic ABC transporters this ECF transporter provides the energy necessary to transport a number of different substrates including 5-formyltetrahydrofolate, pantothenate and riboflavin. Expression of the complex plus FolT in E.coli allows 5-formyltetrahydrofolate uptake; 5-formyltetrahydrofolate is not taken up in the absence of FolT or the EcfA1A2T complex. The protein is Energy-coupling factor transporter ATP-binding protein EcfA1 of Leuconostoc mesenteroides subsp. mesenteroides (strain ATCC 8293 / DSM 20343 / BCRC 11652 / CCM 1803 / JCM 6124 / NCDO 523 / NBRC 100496 / NCIMB 8023 / NCTC 12954 / NRRL B-1118 / 37Y).